The primary structure comprises 564 residues: 4-hydroxy-7-methoxy-3-oxo-3,4-dihydro-2H-1,4-benzoxazin-2-yl glucoside beta-D-glucosidase 1d, chloroplastic (564 aa).

A chloroplast-targeting transit peptide spans 1–50 (MALLAAATLNPTTHLSLRSRAGRNSENLWLRSAASSQKSKGRFCNLTVRA). Residues Gln92, His194, and 239-240 (NE) each bind a beta-D-glucoside. Glu240 (proton donor) is an active-site residue. Cys259 and Cys265 form a disulfide bridge. Residues Tyr383, Glu456, Trp504, 511-512 (EW), and Phe520 each bind a beta-D-glucoside. The active-site Nucleophile is Glu456.

The protein belongs to the glycosyl hydrolase 1 family. In terms of assembly, homo- and heterohexamers. In terms of tissue distribution, expressed in young seedlings early after germination.

Its subcellular location is the plastid. The protein localises to the chloroplast. It carries out the reaction Hydrolysis of terminal, non-reducing beta-D-glucosyl residues with release of beta-D-glucose.. The catalysed reaction is DIMBOA beta-D-glucoside + H2O = DIMBOA + D-glucose. It catalyses the reaction DIBOA beta-D-glucoside + H2O = DIBOA + D-glucose. Its function is as follows. Acts in defense of young plant parts against pests via the production of hydroxamic acids from hydroxamic acid glucosides. Enzymatic activity is highly correlated with plant growth. The preferred substrate is DIMBOA-beta-D-glucoside. The chain is 4-hydroxy-7-methoxy-3-oxo-3,4-dihydro-2H-1,4-benzoxazin-2-yl glucoside beta-D-glucosidase 1d, chloroplastic (GLU1D) from Triticum aestivum (Wheat).